A 330-amino-acid polypeptide reads, in one-letter code: Mas-related G-protein coupled receptor member X2 (330 aa).

Topologically, residues 1–33 (MDPTTLVWGTESTTMNGNDQALPLLCGKETLIL) are extracellular. A helical transmembrane segment spans residues 34 to 54 (VVLILFIALVGLVGNAFVLWL). The Cytoplasmic segment spans residues 55–63 (LGFRMRRNA). Residues 64–84 (FSVYVLSLAGADFLFLCFPMI) traverse the membrane as a helical segment. The Extracellular portion of the chain corresponds to 85-96 (NCLAYLINFFHS). Residues 97–117 (ISINFPSFFTTVMTCAYLAGL) form a helical membrane-spanning segment. Residues 118-144 (SMLSAISTERCLSVLWPIWYRSRRPRH) lie on the Cytoplasmic side of the membrane. A helical transmembrane segment spans residues 145–165 (LSAVMCVLLWALSLLLSILEG). The Extracellular segment spans residues 166-184 (KFCGFLFSDGDSGWCQTFD). The helical transmembrane segment at 185–205 (FITAAWLMFLFVVLCGSSLAL) threads the bilayer. Over 206 to 228 (LVRILCGSRGLPLTRLYLTILLT) the chain is Cytoplasmic. Residues 229–249 (VLIFLLCGLPFGIQWFLILWI) form a helical membrane-spanning segment. At 250–264 (WKNSDVLFCHIHPVS) the chain is on the extracellular side. A helical membrane pass occupies residues 265 to 285 (VVLSSFNSSANPIIYFFVGSF). Over 286-330 (RKQWRLRQPVLKLALQRALQDTAEVDHSEGCFSQGTLEMSGSSLV) the chain is Cytoplasmic.

Belongs to the G-protein coupled receptor 1 family. Mas subfamily.

It localises to the cell membrane. Mast cell-specific receptor for basic secretagogues, i.e. cationic amphiphilic drugs, as well as endo- or exogenous peptides, consisting of a basic head group and a hydrophobic core. Recognizes and binds small molecules containing a cyclized tetrahydroisoquinoline (THIQ), such as non-steroidal neuromuscular blocking drugs (NMBDs), including tubocurarine and atracurium. In response to these compounds, mediates pseudo-allergic reactions characterized by histamine release, inflammation and airway contraction. This Trachypithecus francoisi (Francois' leaf monkey) protein is Mas-related G-protein coupled receptor member X2 (MRGPRX2).